Consider the following 348-residue polypeptide: Sensor protein VraS (348 aa).

2 helical membrane passes run isoleucine 13–isoleucine 33 and isoleucine 43–valine 63. The 192-residue stretch at arginine 150–arginine 341 folds into the Histidine kinase domain.

It is found in the cell membrane. The enzyme catalyses ATP + protein L-histidine = ADP + protein N-phospho-L-histidine.. In terms of biological role, member of the two-component regulatory system VraS/VraR involved in the control of the cell wall peptidoglycan biosynthesis. Probably activates VraR by phosphorylation. This Staphylococcus haemolyticus (strain JCSC1435) protein is Sensor protein VraS (vraS).